The chain runs to 985 residues: Regulator of telomere elongation helicase 1 homolog (985 aa).

Residues 7–303 (AGIPVHFPFE…QDMAGDEPKD (297 aa)) enclose the Helicase ATP-binding domain. ATP is bound at residue 42–49 (SPTGTGKT). [4Fe-4S] cluster is bound by residues Cys146, Cys164, Cys173, and Cys209. The DEAH box signature appears at 252–255 (DEAH). The residue at position 874 (Thr874) is a Phosphothreonine.

The protein belongs to the helicase family. RAD3/XPD subfamily.

It is found in the nucleus. It carries out the reaction ATP + H2O = ADP + phosphate + H(+). Functionally, a probable ATP-dependent DNA helicase implicated in DNA repair and the maintenance of genomic stability. Acts as an anti-recombinase to counteract toxic recombination and limit crossover during meiosis. Regulates meiotic recombination and crossover homeostasis by physically dissociating strand invasion events and thereby promotes noncrossover repair by meiotic synthesis dependent strand annealing (SDSA) as well as disassembly of D loop recombination intermediates. The sequence is that of Regulator of telomere elongation helicase 1 homolog from Drosophila erecta (Fruit fly).